The chain runs to 274 residues: Formamidopyrimidine-DNA glycosylase (274 aa).

The Schiff-base intermediate with DNA role is filled by Pro-2. Glu-3 functions as the Proton donor in the catalytic mechanism. The Proton donor; for beta-elimination activity role is filled by Lys-57. The DNA site is built by His-90, Arg-109, and Lys-150. An FPG-type zinc finger spans residues 235-269 (FVYGRKDKACLICGHTIESIKQGQRSTFFCRHCQH). Catalysis depends on Arg-259, which acts as the Proton donor; for delta-elimination activity.

Belongs to the FPG family. In terms of assembly, monomer. Requires Zn(2+) as cofactor.

The enzyme catalyses Hydrolysis of DNA containing ring-opened 7-methylguanine residues, releasing 2,6-diamino-4-hydroxy-5-(N-methyl)formamidopyrimidine.. It catalyses the reaction 2'-deoxyribonucleotide-(2'-deoxyribose 5'-phosphate)-2'-deoxyribonucleotide-DNA = a 3'-end 2'-deoxyribonucleotide-(2,3-dehydro-2,3-deoxyribose 5'-phosphate)-DNA + a 5'-end 5'-phospho-2'-deoxyribonucleoside-DNA + H(+). Its function is as follows. Involved in base excision repair of DNA damaged by oxidation or by mutagenic agents. Acts as a DNA glycosylase that recognizes and removes damaged bases. Has a preference for oxidized purines, such as 7,8-dihydro-8-oxoguanine (8-oxoG). Has AP (apurinic/apyrimidinic) lyase activity and introduces nicks in the DNA strand. Cleaves the DNA backbone by beta-delta elimination to generate a single-strand break at the site of the removed base with both 3'- and 5'-phosphates. This Proteus mirabilis (strain HI4320) protein is Formamidopyrimidine-DNA glycosylase.